Reading from the N-terminus, the 78-residue chain is Large ribosomal subunit protein bL28 (78 aa).

The tract at residues Met1–His20 is disordered.

This sequence belongs to the bacterial ribosomal protein bL28 family.

The polypeptide is Large ribosomal subunit protein bL28 (Vibrio parahaemolyticus serotype O3:K6 (strain RIMD 2210633)).